The chain runs to 121 residues: MSSPHVLVVDDTHVDRHVISMALMRHNVRVTAVESVMQALVFLDSEHDVNMIVSDYCMPEMTGYDLLMEVKKSPRLVHLPVIIASSDNIPERIRKCFDGGAKDYILKPVKIADVPRILNYI.

The 117-residue stretch at 5 to 121 folds into the Response regulatory domain; sequence HVLVVDDTHV…ADVPRILNYI (117 aa). The residue at position 55 (D55) is a 4-aspartylphosphate.

Belongs to the ARR family. Type-A subfamily. Post-translationally, two-component system major event consists of a His-to-Asp phosphorelay between a sensor histidine kinase (HK) and a response regulator (RR). In plants, the His-to-Asp phosphorelay involves an additional intermediate named Histidine-containing phosphotransfer protein (HPt). This multistep phosphorelay consists of a His-Asp-His-Asp sequential transfer of a phosphate group between first a His and an Asp of the HK protein, followed by the transfer to a conserved His of the HPt protein and finally the transfer to an Asp in the receiver domain of the RR protein. Expressed in flowers and panicles.

Functionally, functions as a response regulator involved in His-to-Asp phosphorelay signal transduction system. Phosphorylation of the Asp residue in the receiver domain activates the ability of the protein to promote the transcription of target genes. Type-A response regulators seem to act as negative regulators of the cytokinin signaling. In Oryza sativa subsp. japonica (Rice), this protein is Two-component response regulator ORR13.